We begin with the raw amino-acid sequence, 310 residues long: Small ribosomal subunit biogenesis GTPase RsgA (310 aa).

One can recognise a CP-type G domain in the interval 77 to 238 (LSKQSHILAA…IIDTPGIKGF (162 aa)). GTP-binding positions include 126–129 (NKVD) and 180–188 (GHSGVGKST). Zn(2+) contacts are provided by Cys-262, Cys-267, His-269, and Cys-275.

It belongs to the TRAFAC class YlqF/YawG GTPase family. RsgA subfamily. Monomer. Associates with 30S ribosomal subunit, binds 16S rRNA. Zn(2+) is required as a cofactor.

Its subcellular location is the cytoplasm. In terms of biological role, one of several proteins that assist in the late maturation steps of the functional core of the 30S ribosomal subunit. Helps release RbfA from mature subunits. May play a role in the assembly of ribosomal proteins into the subunit. Circularly permuted GTPase that catalyzes slow GTP hydrolysis, GTPase activity is stimulated by the 30S ribosomal subunit. The chain is Small ribosomal subunit biogenesis GTPase RsgA from Bacteroides fragilis (strain YCH46).